Consider the following 132-residue polypeptide: Protein NrdI (132 aa).

This sequence belongs to the NrdI family.

Functionally, probably involved in ribonucleotide reductase function. This chain is Protein NrdI, found in Bartonella henselae (strain ATCC 49882 / DSM 28221 / CCUG 30454 / Houston 1) (Rochalimaea henselae).